Here is an 858-residue protein sequence, read N- to C-terminus: DNA mismatch repair protein MutS (858 aa).

Glycine 637–serine 644 contributes to the ATP binding site.

Belongs to the DNA mismatch repair MutS family.

Its function is as follows. This protein is involved in the repair of mismatches in DNA. It is possible that it carries out the mismatch recognition step. This protein has a weak ATPase activity. This chain is DNA mismatch repair protein MutS, found in Protochlamydia amoebophila (strain UWE25).